Consider the following 695-residue polypeptide: MSARRSAIFVNTTDTAVANLVVFEVPAGTAIGAAMRELDLPNKGPEAIVCAKDAEGQLKDLSHVPETTATFTAVPANTDDGRAVIRHSCAHVLAQAVQAEFPGTKLGIGPAIENGFYYDFDAAEPFTPEDLKTIEKRMKKIIKTGQKFERRVYESAEAAAEELKNEPYKLELIQDKGNVDPNSDEATEVGAGELTAYDNVNPRTSEVEWSDLCRGPHIPTTRYIPAFALTRSSAAYWRGDQDNAGLQRIYGTAWEDKESLDAYQTMLAEAEKRDHRRLGTELDLFSFPDDLGSGLPVFHPNGGIVRNEMEDHSRRRHIAAGYSFVNTPHITKQDLFERSGHLGFYKDGMFPPMQVDAEFDEDGNVTKPGQEYYLKPMNCPMHNLIFDSRGRSYRELPLRLFEFGNVYRYEKSGVIHGLTRARGFTQDDAHIYCTEDQLEAELTSVLDFILSLLRDYGLDDFYLELSTRDPKKSVGSDEIWERSTEILNRVATNSGLELVPDPEGAAFYGPKISVQARDAIGRTWQMSTVQLDFNMPERFNLEYTSSDGSKQQPIMIHRALFGSIERFFGVLLEHYAGAFPAWLAPHQVMGIPVADDCIPHLETITAQLREKGIRADVDTSDDRMQKKIRNHTTGKVPFMLLAGARDVEANAVSFRFLDGTQVNGVPVDEAIAVISSWIGDRINDQPSEDSIAARR.

The region spanning 6–75 (SAIFVNTTDT…ETTATFTAVP (70 aa)) is the TGS domain. A catalytic region spans residues 274 to 580 (DHRRLGTELD…LLEHYAGAFP (307 aa)). Positions 379, 430, and 557 each coordinate Zn(2+).

The protein belongs to the class-II aminoacyl-tRNA synthetase family. Homodimer. Zn(2+) is required as a cofactor.

The protein resides in the cytoplasm. It catalyses the reaction tRNA(Thr) + L-threonine + ATP = L-threonyl-tRNA(Thr) + AMP + diphosphate + H(+). Catalyzes the attachment of threonine to tRNA(Thr) in a two-step reaction: L-threonine is first activated by ATP to form Thr-AMP and then transferred to the acceptor end of tRNA(Thr). Also edits incorrectly charged L-seryl-tRNA(Thr). The chain is Threonine--tRNA ligase from Corynebacterium glutamicum (strain ATCC 13032 / DSM 20300 / JCM 1318 / BCRC 11384 / CCUG 27702 / LMG 3730 / NBRC 12168 / NCIMB 10025 / NRRL B-2784 / 534).